Here is a 500-residue protein sequence, read N- to C-terminus: Protein nucleotidyltransferase YdiU (500 aa).

ATP contacts are provided by Gly-96, Gly-98, Arg-99, Lys-119, Asp-131, Gly-132, Arg-182, and Arg-189. The active-site Proton acceptor is Asp-258. Mg(2+) contacts are provided by Asn-259 and Asp-268. Asp-268 serves as a coordination point for ATP.

Belongs to the SELO family. Requires Mg(2+) as cofactor. Mn(2+) serves as cofactor.

The catalysed reaction is L-seryl-[protein] + ATP = 3-O-(5'-adenylyl)-L-seryl-[protein] + diphosphate. It catalyses the reaction L-threonyl-[protein] + ATP = 3-O-(5'-adenylyl)-L-threonyl-[protein] + diphosphate. The enzyme catalyses L-tyrosyl-[protein] + ATP = O-(5'-adenylyl)-L-tyrosyl-[protein] + diphosphate. It carries out the reaction L-histidyl-[protein] + UTP = N(tele)-(5'-uridylyl)-L-histidyl-[protein] + diphosphate. The catalysed reaction is L-seryl-[protein] + UTP = O-(5'-uridylyl)-L-seryl-[protein] + diphosphate. It catalyses the reaction L-tyrosyl-[protein] + UTP = O-(5'-uridylyl)-L-tyrosyl-[protein] + diphosphate. Its function is as follows. Nucleotidyltransferase involved in the post-translational modification of proteins. It can catalyze the addition of adenosine monophosphate (AMP) or uridine monophosphate (UMP) to a protein, resulting in modifications known as AMPylation and UMPylation. This chain is Protein nucleotidyltransferase YdiU, found in Rhizobium leguminosarum bv. trifolii (strain WSM2304).